The following is a 250-amino-acid chain: UPF0193 protein EVG1 homolog (250 aa).

The segment at 86 to 110 (ESLRNGEPLPLPEPPRPNTNNDPDK) is disordered.

It belongs to the UPF0193 (EVG1) family.

This chain is UPF0193 protein EVG1 homolog, found in Drosophila melanogaster (Fruit fly).